Reading from the N-terminus, the 78-residue chain is MSRVCQVTGKRPVTGNNRSHARNATKRRFLPNLQTHRFWVESEKRFVKLRLSAKGMRIIDKKGIDTVLADMRARGENV.

A disordered region spans residues 1–20; the sequence is MSRVCQVTGKRPVTGNNRSH.

It belongs to the bacterial ribosomal protein bL28 family.

The protein is Large ribosomal subunit protein bL28 of Vibrio campbellii (strain ATCC BAA-1116).